A 97-amino-acid polypeptide reads, in one-letter code: DNA-directed RNA polymerase subunit omega (97 aa).

It belongs to the RNA polymerase subunit omega family. As to quaternary structure, the RNAP catalytic core consists of 2 alpha, 1 beta, 1 beta' and 1 omega subunit. When a sigma factor is associated with the core the holoenzyme is formed, which can initiate transcription.

It catalyses the reaction RNA(n) + a ribonucleoside 5'-triphosphate = RNA(n+1) + diphosphate. Promotes RNA polymerase assembly. Latches the N- and C-terminal regions of the beta' subunit thereby facilitating its interaction with the beta and alpha subunits. In Coxiella burnetii (strain Dugway 5J108-111), this protein is DNA-directed RNA polymerase subunit omega.